A 158-amino-acid polypeptide reads, in one-letter code: Crossover junction endodeoxyribonuclease RuvC (158 aa).

Residues Asp-7, Glu-66, and Asp-139 contribute to the active site. Asp-7, Glu-66, and Asp-139 together coordinate Mg(2+).

It belongs to the RuvC family. In terms of assembly, homodimer which binds Holliday junction (HJ) DNA. The HJ becomes 2-fold symmetrical on binding to RuvC with unstacked arms; it has a different conformation from HJ DNA in complex with RuvA. In the full resolvosome a probable DNA-RuvA(4)-RuvB(12)-RuvC(2) complex forms which resolves the HJ. It depends on Mg(2+) as a cofactor.

It is found in the cytoplasm. It carries out the reaction Endonucleolytic cleavage at a junction such as a reciprocal single-stranded crossover between two homologous DNA duplexes (Holliday junction).. Functionally, the RuvA-RuvB-RuvC complex processes Holliday junction (HJ) DNA during genetic recombination and DNA repair. Endonuclease that resolves HJ intermediates. Cleaves cruciform DNA by making single-stranded nicks across the HJ at symmetrical positions within the homologous arms, yielding a 5'-phosphate and a 3'-hydroxyl group; requires a central core of homology in the junction. The consensus cleavage sequence is 5'-(A/T)TT(C/G)-3'. Cleavage occurs on the 3'-side of the TT dinucleotide at the point of strand exchange. HJ branch migration catalyzed by RuvA-RuvB allows RuvC to scan DNA until it finds its consensus sequence, where it cleaves and resolves the cruciform DNA. The protein is Crossover junction endodeoxyribonuclease RuvC of Campylobacter lari (strain RM2100 / D67 / ATCC BAA-1060).